The sequence spans 353 residues: Iron(III) enterobactin esterase (353 aa).

Belongs to the Fes family.

It is found in the cytoplasm. It catalyses the reaction Fe(III)-enterobactin + 3 H2O + H(+) = Fe(III)-[N-(2,3-dihydroxybenzoyl)-L-serine] + 2 N-(2,3-dihydroxybenzoyl)-L-serine. It carries out the reaction Fe(III)-enterobactin + H2O = Fe(III)-[N-(2,3-dihydroxybenzoyl)-L-serine]3 + H(+). The catalysed reaction is Fe(III)-[N-(2,3-dihydroxybenzoyl)-L-serine]3 + H2O + H(+) = Fe(III)-[N-(2,3-dihydroxybenzoyl)-L-serine]2 + N-(2,3-dihydroxybenzoyl)-L-serine. The enzyme catalyses Fe(III)-[N-(2,3-dihydroxybenzoyl)-L-serine]2 + H2O + H(+) = Fe(III)-[N-(2,3-dihydroxybenzoyl)-L-serine] + N-(2,3-dihydroxybenzoyl)-L-serine. In terms of biological role, catalyzes the hydrolysis of ferric enterobactin (Fe-Ent). Is responsible for the release of iron from ferric enterobactin. The protein is Iron(III) enterobactin esterase of Yersinia enterocolitica.